A 432-amino-acid chain; its full sequence is MEKLTLSPISRIDGEINLPGSKSLSNRALLLAALAKGTTQVTNLLDSDDIRYMLNALKALGVNYQLSDDKTVCVVEGIGGAFQWQNGLSLFLGNAGTAMRPLAAALCLKGDTESEVILTGEPRMKERPIKHLVDALRQTGANIQYLENDGYPPLAIRNQGIFGGKVQIDGSISSQFLTALLMAAPLGEGDMEIEILGELVSKPYIDITLAMMKDFGINVEHYNYQRFLIKGKQYYISPQTYLVEGDASSASYFLAAAAIKGKVKVTGIGRNSIQGDRLFADVLAQMGAKVTWGEDFIQVEKSELKGIDMDMNHIPDAAMTIAITALFAQGETVIRNIYNWRVKETDRLTAIATELRKLGAEVEEGEDFIRIQPLALDKFKHAEIATYNDHRIAMCFSLIALSDTSVTILDPACTAKTFPTYFSEFEKISKNQ.

Residues Lys22, Ser23, and Arg27 each contribute to the 3-phosphoshikimate site. Lys22 is a phosphoenolpyruvate binding site. Positions 96 and 127 each coordinate phosphoenolpyruvate. Ser173, Ser174, Gln175, Ser201, Asp316, Asn339, and Lys343 together coordinate 3-phosphoshikimate. Phosphoenolpyruvate is bound at residue Gln175. Catalysis depends on Asp316, which acts as the Proton acceptor. Phosphoenolpyruvate contacts are provided by Arg347, Arg391, and Lys416.

This sequence belongs to the EPSP synthase family. Monomer.

The protein resides in the cytoplasm. The catalysed reaction is 3-phosphoshikimate + phosphoenolpyruvate = 5-O-(1-carboxyvinyl)-3-phosphoshikimate + phosphate. The protein operates within metabolic intermediate biosynthesis; chorismate biosynthesis; chorismate from D-erythrose 4-phosphate and phosphoenolpyruvate: step 6/7. Its function is as follows. Catalyzes the transfer of the enolpyruvyl moiety of phosphoenolpyruvate (PEP) to the 5-hydroxyl of shikimate-3-phosphate (S3P) to produce enolpyruvyl shikimate-3-phosphate and inorganic phosphate. This is 3-phosphoshikimate 1-carboxyvinyltransferase from Histophilus somni (strain 2336) (Haemophilus somnus).